Here is a 182-residue protein sequence, read N- to C-terminus: Heat shock protein beta-2 (182 aa).

Positions Arg55–Ser163 constitute a sHSP domain.

The protein belongs to the small heat shock protein (HSP20) family. In terms of assembly, interacts with DMPK; may enhance its kinase activity.

Its subcellular location is the cytoplasm. It localises to the nucleus. Its function is as follows. May regulate the kinase DMPK. In Mus musculus (Mouse), this protein is Heat shock protein beta-2 (Hspb2).